Here is a 92-residue protein sequence, read N- to C-terminus: Large ribosomal subunit protein eL43 (92 aa).

The C4-type zinc-finger motif lies at 39–60 (CSFCGKDSMKRAVVGIWSCKRC).

It belongs to the eukaryotic ribosomal protein eL43 family.

This is Large ribosomal subunit protein eL43 (RpL37A) from Drosophila melanogaster (Fruit fly).